Reading from the N-terminus, the 316-residue chain is Daunorubicin resistance ATP-binding protein DrrA3 (316 aa).

Positions 6–236 constitute an ABC transporter domain; the sequence is ITVDGAEKRY…TGGDRIDVVL (231 aa). 38-45 is a binding site for ATP; sequence GPNGAGKT.

It belongs to the ABC transporter superfamily. Drug exporter-1 (DrugE1) (TC 3.A.1.105) family. In terms of assembly, the complex is probably composed of two ATP-binding proteins (DrrA3) and two transmembrane proteins (DrrB3).

It localises to the cell membrane. It catalyses the reaction daunorubicin(in) + ATP + H2O = daunorubicin(out) + ADP + phosphate + H(+). Its function is as follows. Part of the ABC transporter complex DrrA3B3 involved in daunorubicin efflux. Responsible for energy coupling to the transport system. Confers self-resistance to daunorubicin, an antibiotic produced by S.coeruleorubidus. The efficiency of DrrA3B3 to export daunorubicin is probably lower than that of DrrA1B1 or DrrA2B2. This Streptomyces coeruleorubidus protein is Daunorubicin resistance ATP-binding protein DrrA3.